We begin with the raw amino-acid sequence, 393 residues long: uncharacterized protein (393 aa).

A disordered region spans residues 345–393 (PNKWATDDAARREMERTRKARYRAKNRAVADPEDSPPGKRLRRGPKSST). Basic and acidic residues predominate over residues 349–361 (ATDDAARREMERT). The segment covering 383–393 (KRLRRGPKSST) has biased composition (basic residues).

This is an uncharacterized protein from Ictalurid herpesvirus 1 (strain Auburn) (IcHV-1).